Consider the following 226-residue polypeptide: MKVVKICGIKTVEAASVAIDNGANLLGCILVPNRARTIDLEVAKQIARMVKRDRNPPPKFAGGTSTQHFEQVAQWIIENGPFLVGVFRNQPKEEVFRIAREVGLDFIQLHGSEDKLEFLGTEFGLIPRYVVPDELDLLEEQSLSLTQCVSLPLLDSEVGGEGKLLDWTFIEKLPTKAILAGGLTPENLPTFDNILGYDVSGGVETNGVKDSLKIIKFIQKGHAQSS.

Belongs to the TrpF family.

It carries out the reaction N-(5-phospho-beta-D-ribosyl)anthranilate = 1-(2-carboxyphenylamino)-1-deoxy-D-ribulose 5-phosphate. It functions in the pathway amino-acid biosynthesis; L-tryptophan biosynthesis; L-tryptophan from chorismate: step 3/5. The protein is N-(5'-phosphoribosyl)anthranilate isomerase (TRP1) of Candida albicans (strain SC5314 / ATCC MYA-2876) (Yeast).